The chain runs to 405 residues: NADH-quinone oxidoreductase subunit D (405 aa).

It belongs to the complex I 49 kDa subunit family. As to quaternary structure, NDH-1 is composed of 14 different subunits. Subunits NuoB, C, D, E, F, and G constitute the peripheral sector of the complex.

The protein resides in the cell inner membrane. It catalyses the reaction a quinone + NADH + 5 H(+)(in) = a quinol + NAD(+) + 4 H(+)(out). NDH-1 shuttles electrons from NADH, via FMN and iron-sulfur (Fe-S) centers, to quinones in the respiratory chain. The immediate electron acceptor for the enzyme in this species is believed to be ubiquinone. Couples the redox reaction to proton translocation (for every two electrons transferred, four hydrogen ions are translocated across the cytoplasmic membrane), and thus conserves the redox energy in a proton gradient. The polypeptide is NADH-quinone oxidoreductase subunit D (Sphingopyxis alaskensis (strain DSM 13593 / LMG 18877 / RB2256) (Sphingomonas alaskensis)).